The chain runs to 338 residues: MADADKDRLVSGDVDDSNEAQIEKSLRPRMLAQYIGQDRVKHQLEVYITAAKQREESLDHVLLYGPPGLGKTTLALVIANELGVNIRTTSGPAIEKPGDLVALLNELHPGDVLFIDEIHRLPKIVEEMLYSAMEDFYIDIVVGQGPTAHPVHFPLPPFTLIGATTRAGMLSAPLRDRFGISEHMAYYSADDLSEIVKRSATIFDMAIDAEGAHEIARRSRGTPRVANRLLKRIRDFAEVAGQSPVDIQMVDHALDQLQVDQQGLDQIDRKLLMFMIRDYEGGPVGLSTIAANIGEEMATIEEMYEPYLLQIGYLKRTPRGRMVTPAGFAHMGMSAEQH.

The tract at residues 4–187 is large ATPase domain (RuvB-L); sequence ADKDRLVSGD…FGISEHMAYY (184 aa). ATP is bound by residues Leu-26, Arg-27, Gly-68, Lys-71, Thr-72, Thr-73, 134–136, Arg-177, Tyr-187, and Arg-224; that span reads EDF. A Mg(2+)-binding site is contributed by Thr-72. The interval 188 to 258 is small ATPAse domain (RuvB-S); the sequence is SADDLSEIVK…MVDHALDQLQ (71 aa). Residues 261–338 form a head domain (RuvB-H) region; the sequence is QQGLDQIDRK…AHMGMSAEQH (78 aa). DNA-binding residues include Arg-316 and Arg-321.

Belongs to the RuvB family. In terms of assembly, homohexamer. Forms an RuvA(8)-RuvB(12)-Holliday junction (HJ) complex. HJ DNA is sandwiched between 2 RuvA tetramers; dsDNA enters through RuvA and exits via RuvB. An RuvB hexamer assembles on each DNA strand where it exits the tetramer. Each RuvB hexamer is contacted by two RuvA subunits (via domain III) on 2 adjacent RuvB subunits; this complex drives branch migration. In the full resolvosome a probable DNA-RuvA(4)-RuvB(12)-RuvC(2) complex forms which resolves the HJ.

The protein localises to the cytoplasm. The enzyme catalyses ATP + H2O = ADP + phosphate + H(+). The RuvA-RuvB-RuvC complex processes Holliday junction (HJ) DNA during genetic recombination and DNA repair, while the RuvA-RuvB complex plays an important role in the rescue of blocked DNA replication forks via replication fork reversal (RFR). RuvA specifically binds to HJ cruciform DNA, conferring on it an open structure. The RuvB hexamer acts as an ATP-dependent pump, pulling dsDNA into and through the RuvAB complex. RuvB forms 2 homohexamers on either side of HJ DNA bound by 1 or 2 RuvA tetramers; 4 subunits per hexamer contact DNA at a time. Coordinated motions by a converter formed by DNA-disengaged RuvB subunits stimulates ATP hydrolysis and nucleotide exchange. Immobilization of the converter enables RuvB to convert the ATP-contained energy into a lever motion, pulling 2 nucleotides of DNA out of the RuvA tetramer per ATP hydrolyzed, thus driving DNA branch migration. The RuvB motors rotate together with the DNA substrate, which together with the progressing nucleotide cycle form the mechanistic basis for DNA recombination by continuous HJ branch migration. Branch migration allows RuvC to scan DNA until it finds its consensus sequence, where it cleaves and resolves cruciform DNA. The sequence is that of Holliday junction branch migration complex subunit RuvB from Lacticaseibacillus paracasei (strain ATCC 334 / BCRC 17002 / CCUG 31169 / CIP 107868 / KCTC 3260 / NRRL B-441) (Lactobacillus paracasei).